A 413-amino-acid polypeptide reads, in one-letter code: Peptide chain release factor 1, mitochondrial (413 aa).

At Gln287 the chain carries N5-methylglutamine. The interval 335 to 363 is disordered; the sequence is RLEKEEKERKARKSQVSSTNRSDKIRTYN.

The protein belongs to the prokaryotic/mitochondrial release factor family. Methylation of glutamine in the GGQ triplet is conserved from bacteria to mammals. N5-methylated on Gln-287 by MTQ1.

The protein resides in the mitochondrion. Its function is as follows. Mitochondrial peptide chain release factor that directs the termination of translation in response to the peptide chain termination codons UAA and UAG. The chain is Peptide chain release factor 1, mitochondrial (MRF1) from Saccharomyces cerevisiae (strain ATCC 204508 / S288c) (Baker's yeast).